A 948-amino-acid chain; its full sequence is Valine--tRNA ligase (948 aa).

The 'HIGH' region signature appears at 40 to 50; sequence PNVTGSLHMGH. The 'KMSKS' region motif lies at 551-555; the sequence is KMSKS. ATP is bound at residue Lys554. Residues 879-945 are a coiled coil; it reads LIDKGAELAR…GKLAEQHARI (67 aa).

Belongs to the class-I aminoacyl-tRNA synthetase family. ValS type 1 subfamily. Monomer.

Its subcellular location is the cytoplasm. It catalyses the reaction tRNA(Val) + L-valine + ATP = L-valyl-tRNA(Val) + AMP + diphosphate. In terms of biological role, catalyzes the attachment of valine to tRNA(Val). As ValRS can inadvertently accommodate and process structurally similar amino acids such as threonine, to avoid such errors, it has a 'posttransfer' editing activity that hydrolyzes mischarged Thr-tRNA(Val) in a tRNA-dependent manner. This chain is Valine--tRNA ligase, found in Pseudomonas syringae pv. tomato (strain ATCC BAA-871 / DC3000).